A 107-amino-acid chain; its full sequence is Large ribosomal subunit protein eL33B (107 aa).

A2 is subject to N-acetylalanine; partial. A Glycyl lysine isopeptide (Lys-Gly) (interchain with G-Cter in ubiquitin) cross-link involves residue K47.

This sequence belongs to the eukaryotic ribosomal protein eL33 family. In terms of assembly, component of the large ribosomal subunit (LSU). Mature yeast ribosomes consist of a small (40S) and a large (60S) subunit. The 40S small subunit contains 1 molecule of ribosomal RNA (18S rRNA) and 33 different proteins (encoded by 57 genes). The large 60S subunit contains 3 rRNA molecules (25S, 5.8S and 5S rRNA) and 46 different proteins (encoded by 81 genes). In terms of processing, N-terminally acetylated by acetyltransferase NatA.

It localises to the cytoplasm. In terms of biological role, component of the ribosome, a large ribonucleoprotein complex responsible for the synthesis of proteins in the cell. The small ribosomal subunit (SSU) binds messenger RNAs (mRNAs) and translates the encoded message by selecting cognate aminoacyl-transfer RNA (tRNA) molecules. The large subunit (LSU) contains the ribosomal catalytic site termed the peptidyl transferase center (PTC), which catalyzes the formation of peptide bonds, thereby polymerizing the amino acids delivered by tRNAs into a polypeptide chain. The nascent polypeptides leave the ribosome through a tunnel in the LSU and interact with protein factors that function in enzymatic processing, targeting, and the membrane insertion of nascent chains at the exit of the ribosomal tunnel. The sequence is that of Large ribosomal subunit protein eL33B from Saccharomyces cerevisiae (strain ATCC 204508 / S288c) (Baker's yeast).